The primary structure comprises 491 residues: Keratin, type II microfibrillar, component 7C (491 aa).

Blocked amino end (Cys) is present on cysteine 1. A head region spans residues 1 to 109 (CGFSTVGSGF…PNAQCVKQEE (109 aa)). The region spanning 109–420 (EKEQIKCLNN…RLLEGEEQRL (312 aa)) is the IF rod domain. The coil 1A stretch occupies residues 110 to 144 (KEQIKCLNNRFAAFIDKVRFLEQQNKLLETKLQFF). Residues 145–154 (QNRQCCESNL) form a linker 1 region. A coil 1B region spans residues 155–255 (EPLFEGYIET…YQEEIRVLQA (101 aa)). The interval 256-272 (NISDTSVIVKMDNSRDL) is linker 12. The interval 273–416 (NMDCIVAEIK…ATYRRLLEGE (144 aa)) is coil 2. The tract at residues 417–491 (EQRLCEGVGA…GGGSCSLGRC (75 aa)) is tail.

It belongs to the intermediate filament family.

Wool microfibrillar keratin. In Ovis aries (Sheep), this protein is Keratin, type II microfibrillar, component 7C.